The sequence spans 430 residues: Levansucrase Lscgamma (430 aa).

Residues Trp60, Asp61, Ala147, Arg217, and Asp218 each coordinate sucrose. Residue Asp61 is the Nucleophile of the active site. Catalysis depends on Glu302, which acts as the Proton donor/acceptor.

Belongs to the glycosyl hydrolase 68 family. In terms of assembly, homodimer.

It carries out the reaction [6)-beta-D-fructofuranosyl-(2-&gt;](n) alpha-D-glucopyranoside + sucrose = [6)-beta-D-fructofuranosyl-(2-&gt;](n+1) alpha-D-glucopyranoside + D-glucose. Its activity is regulated as follows. Sucrose hydrolase activity is negatively affected by salt concentration. The levan polymerization rate increases sharply in relation to sucrose concentration reaching the maximum at 100 mM sucrose, and then steadily decreases, suggesting a strong inhibition of the activity by the substrate. Catalyzes the synthesis of levan, a fructose polymer, by transferring the fructosyl moiety from sucrose to a growing acceptor molecule. Also displays sucrose hydrolase activity. Can depolymerize the levan produced once substrate is completely exhausted. This is Levansucrase Lscgamma from Pseudomonas syringae pv. actinidiae.